Reading from the N-terminus, the 336-residue chain is Quinolinate synthase (336 aa).

Residues histidine 25 and serine 42 each contribute to the iminosuccinate site. [4Fe-4S] cluster is bound at residue cysteine 86. Residues 117–119 and serine 138 contribute to the iminosuccinate site; that span reads YIN. Position 198 (cysteine 198) interacts with [4Fe-4S] cluster. Residues 224–226 and threonine 241 contribute to the iminosuccinate site; that span reads HPE. A [4Fe-4S] cluster-binding site is contributed by cysteine 288.

It belongs to the quinolinate synthase family. Type 3 subfamily. The cofactor is [4Fe-4S] cluster.

It is found in the cytoplasm. It carries out the reaction iminosuccinate + dihydroxyacetone phosphate = quinolinate + phosphate + 2 H2O + H(+). It participates in cofactor biosynthesis; NAD(+) biosynthesis; quinolinate from iminoaspartate: step 1/1. Its function is as follows. Catalyzes the condensation of iminoaspartate with dihydroxyacetone phosphate to form quinolinate. The sequence is that of Quinolinate synthase from Helicobacter pylori (strain ATCC 700392 / 26695) (Campylobacter pylori).